Consider the following 300-residue polypeptide: Protein phosphatase 2C 1 (300 aa).

Residues 23 to 298 (IFAASEMQGW…DNMTTILVYL (276 aa)) enclose the PPM-type phosphatase domain. Mn(2+)-binding residues include Asp-57, Gly-58, Asp-237, and Asp-289.

This sequence belongs to the PP2C family. The cofactor is Mg(2+). Mn(2+) is required as a cofactor. Post-translationally, the N-terminus is blocked.

The protein resides in the membrane. It catalyses the reaction O-phospho-L-seryl-[protein] + H2O = L-seryl-[protein] + phosphate. It carries out the reaction O-phospho-L-threonyl-[protein] + H2O = L-threonyl-[protein] + phosphate. Functionally, serine and threonine phosphatase. The polypeptide is Protein phosphatase 2C 1 (Paramecium tetraurelia).